Consider the following 355-residue polypeptide: Probable L-aspartate decarboxylase (355 aa).

The residue at position 210 (lysine 210) is an N6-(pyridoxal phosphate)lysine.

The protein belongs to the group II decarboxylase family. MfnA subfamily. The cofactor is pyridoxal 5'-phosphate.

It catalyses the reaction L-aspartate + H(+) = beta-alanine + CO2. Its pathway is cofactor biosynthesis; coenzyme A biosynthesis. In terms of biological role, catalyzes the decarboxylation of L-aspartate to produce beta-alanine. The polypeptide is Probable L-aspartate decarboxylase (Halobacterium salinarum (strain ATCC 29341 / DSM 671 / R1)).